A 184-amino-acid polypeptide reads, in one-letter code: Photosystem I assembly protein Ycf4 (184 aa).

Helical transmembrane passes span 22 to 42 and 57 to 77; these read FCWA…GTSS and IIFF…LFIS.

It belongs to the Ycf4 family.

Its subcellular location is the plastid. The protein localises to the chloroplast thylakoid membrane. In terms of biological role, seems to be required for the assembly of the photosystem I complex. The polypeptide is Photosystem I assembly protein Ycf4 (Crucihimalaya wallichii (Rock-cress)).